The primary structure comprises 890 residues: Chloroquine resistance transporter (890 aa).

Disordered stretches follow at residues 1–163 (MPPA…EAPL) and 280–300 (GMQRPCFGSPSTDTRMGAAEG). At 1-349 (MPPAHHGSGG…RATRWIDRNA (349 aa)) the chain is on the cytoplasmic side. The span at 8-19 (SGGRRRPGRGNK) shows a compositional bias: basic residues. Low complexity-rich tracts occupy residues 102–126 (APSQSDLPPSLSPTTASRPATSSRS) and 134–156 (SPVASSSAFSSPAPSASALTSAS). The chain crosses the membrane as a helical span at residues 350–372 (ATVRVACYTFLLLVTSTGNTICF). The Vacuolar segment spans residues 373 to 391 (KKMIDKMPNYSPCLTQVTT). The helical transmembrane segment at 392–412 (VVFVPVFFALSLYTDYAGGLP) threads the bilayer. The Cytoplasmic portion of the chain corresponds to 413-422 (QEMADFPKRN). The helical transmembrane segment at 423 to 443 (FAVMGFLDSFSGVMAIIGAVH) threads the bilayer. Topologically, residues 444–447 (TTGT) are vacuolar. Residues 448-468 (TQVVLQQSCIVFSLLASIVML) form a helical membrane-spanning segment. Residues 469–471 (RKR) lie on the Cytoplasmic side of the membrane. The chain crosses the membrane as a helical span at residues 472–492 (FHAAHYLGALVIILGVLVVKL). The Vacuolar segment spans residues 493–505 (PDLLHPSSDGGGD). The helical transmembrane segment at 506-526 (VFVFNLLYLLSNLPTAVSCVY) threads the bilayer. The Cytoplasmic portion of the chain corresponds to 527–544 (KEVAFRGVEMGTNYLQAW). A helical membrane pass occupies residues 545–565 (VALFQFLIGFLVLPLNALPVL). The Vacuolar segment spans residues 566–614 (GPQRVPLAELPASLWNGTRCLFGFNTIVTNCGGAGNMESPCDNCEGAWK). N581 is a glycosylation site (N-linked (GlcNAc...) asparagine). Disulfide bonds link C585/C609 and C596/C606. Residues 615–634 (YVGMYLSFNLLYNMFIIFVV) traverse the membrane as a helical segment. Topologically, residues 635-640 (KSGGAA) are cytoplasmic. Residues 641 to 663 (LTFLVSTLRLPVTALAFCSRAIM) form a helical membrane-spanning segment. Topologically, residues 664–673 (GDRAVPPKAT) are vacuolar. Residues 674–694 (DFYGLLVLILGLVIYRAGGIM) traverse the membrane as a helical segment. The Cytoplasmic portion of the chain corresponds to 695-890 (KRRAQRRAVA…GKSRANNGCI (196 aa)). Residues 798 to 871 (AAFTPFTQRM…NRVGGYEPPS (74 aa)) are disordered.

The protein belongs to the CRT-like transporter family.

It localises to the vacuole membrane. Nutrient transporter. Involved in maintaining the osmotic homeostasis of the digestive vacuole. Required for the proper organization of the endolysosomal system and, in turn, indirectly for microneme secretion and parasite invasion. Required for bradyzoite viability and cyst development. This chain is Chloroquine resistance transporter, found in Toxoplasma gondii.